Here is a 289-residue protein sequence, read N- to C-terminus: MPVVRKIFRRRRGDSESEEDEQDSEEVRLKLEETREVQNLRKRPNGVSAVALLVGEKVQEETTLVDDPFQMKTGGMVDMKKLKERGKDKISEEEDLHLGTSFSAETNRRDEDADMMKYIETELKKRKGIVEHEEQKVKPKNAEDCLYELPENIRVSSAKKTEEMLSNQMLSGIPEVDQGIDAKIKNIISTEDAKARLLAEQQNKKKDSETSFVPTNMAVNYVQHNRFYHEELNAPIRRNKEEPKARPLRVGDTEKPEPERSPPNRKRPANEKATDDYHYEKFKKMNRRY.

Positions 1–12 (MPVVRKIFRRRR) are enriched in basic residues. 2 disordered regions span residues 1-27 (MPVVRKIFRRRRGDSESEEDEQDSEEV) and 86-109 (GKDKISEEEDLHLGTSFSAETNRR). The tract at residues 5 to 58 (RKIFRRRRGDSESEEDEQDSEEVRLKLEETREVQNLRKRPNGVSAVALLVGEKV) is interaction with SNRNP200. Phosphoserine occurs at positions 15 and 17. Tyr-147 bears the Phosphotyrosine mark. The span at 232-283 (LNAPIRRNKEEPKARPLRVGDTEKPEPERSPPNRKRPANEKATDDYHYEKFK) shows a compositional bias: basic and acidic residues. Residues 232-289 (LNAPIRRNKEEPKARPLRVGDTEKPEPERSPPNRKRPANEKATDDYHYEKFKKMNRRY) are disordered. Thr-253 carries the phosphothreonine modification. The residue at position 261 (Ser-261) is a Phosphoserine.

This sequence belongs to the TLS1 family. As to quaternary structure, component of the spliceosome. Interacts with SNRNP200; the interaction is direct. Interacts with PRPF8.

It is found in the nucleus. The protein localises to the chromosome. Its subcellular location is the centromere. In terms of biological role, plays a role in pre-mRNA splicing by promoting usage of the upstream 3'-splice site at alternative NAGNAG splice sites; these are sites featuring alternative acceptor motifs separated by only a few nucleotides. May also modulate exon inclusion events. Plays a role in spliceosomal remodeling by displacing WBP4 from SNRNP200 and may act to inhibit SNRNP200 helicase activity. Binds U5 snRNA. Required for proper chromosome segregation. Not required for splicing of shelterin components. This Pongo abelii (Sumatran orangutan) protein is Splicing factor C9orf78 homolog.